The following is a 369-amino-acid chain: Putative 2-aminoethylphosphonate import ATP-binding protein PhnT (369 aa).

One can recognise an ABC transporter domain in the interval 19–250; that stretch reads IVLDSLRVAY…PPNRFAAEFL (232 aa). 51–58 serves as a coordination point for ATP; the sequence is GPSGSGKT.

It belongs to the ABC transporter superfamily. 2-aminoethylphosphonate importer (TC 3.A.1.11.5) family.

It is found in the cell inner membrane. Functionally, probably part of the PhnSTUV complex (TC 3.A.1.11.5) involved in 2-aminoethylphosphonate import. Probably responsible for energy coupling to the transport system. The polypeptide is Putative 2-aminoethylphosphonate import ATP-binding protein PhnT (phnT) (Salmonella typhimurium (strain LT2 / SGSC1412 / ATCC 700720)).